Consider the following 375-residue polypeptide: Mitogen-activated protein kinase 1 (375 aa).

Residues 43 to 329 (RPPIMPIGRG…VEEALAHPYL (287 aa)) form the Protein kinase domain. ATP is bound by residues 49–57 (IGRGAYGIV) and Lys-72. Catalysis depends on Asp-169, which acts as the Proton acceptor. The residue at position 201 (Thr-201) is a Phosphothreonine. The short motif at 201-203 (TEY) is the TXY element. Phosphotyrosine is present on Tyr-203. The residue at position 206 (Thr-206) is a Phosphothreonine.

The protein belongs to the protein kinase superfamily. CMGC Ser/Thr protein kinase family. MAP kinase subfamily. The cofactor is Mg(2+). In terms of processing, activated by wounding and UV-C in a cultivar-dependent manner; phosphorylated in cv. Pungchon but not in cv. Subicho.

It catalyses the reaction L-seryl-[protein] + ATP = O-phospho-L-seryl-[protein] + ADP + H(+). The enzyme catalyses L-threonyl-[protein] + ATP = O-phospho-L-threonyl-[protein] + ADP + H(+). Its activity is regulated as follows. Activated by threonine and tyrosine phosphorylation. In terms of biological role, stress-inducible protein kinase involved in oxidative stress-mediated and innate immune MAP kinase signaling cascades. The polypeptide is Mitogen-activated protein kinase 1 (Capsicum annuum (Capsicum pepper)).